A 926-amino-acid chain; its full sequence is Alpha-aminoadipic semialdehyde synthase, mitochondrial (926 aa).

The N-terminal 27 residues, 1–27 (MLRAQRPRLARLRACLSRGLHHKPVMA), are a transit peptide targeting the mitochondrion. Residues 28–455 (LRREDVNAWE…DAVITSNGLL (428 aa)) form a lysine-ketoglutarate reductase region. Residues Lys-48, Lys-52, and Lys-56 each carry the N6-acetyllysine modification. Lys-93 is subject to N6-acetyllysine; alternate. An N6-succinyllysine; alternate modification is found at Lys-93. Residue Lys-128 is modified to N6-acetyllysine. Lys-138 is subject to N6-acetyllysine; alternate. An N6-succinyllysine; alternate modification is found at Lys-138. An N6-succinyllysine modification is found at Lys-274. Lys-286 carries the post-translational modification N6-acetyllysine; alternate. N6-succinyllysine; alternate is present on Lys-286. Lys-333 carries the post-translational modification N6-succinyllysine. Lys-458 is modified (N6-acetyllysine; alternate). Lys-458 carries the post-translational modification N6-succinyllysine; alternate. The tract at residues 477–926 (MSTKKKVLVL…VFNTQSTIKL (450 aa)) is saccharopine dehydrogenase. Positions 488, 512, and 516 each coordinate NAD(+). Lys-523 and Lys-535 each carry N6-acetyllysine; alternate. An N6-succinyllysine; alternate mark is found at Lys-523 and Lys-535. NAD(+) contacts are provided by Leu-554, Ala-576, and Ser-577. 577-578 (SY) serves as a coordination point for L-saccharopine. Lys-584 bears the N6-acetyllysine; alternate mark. Lys-584 carries the N6-succinyllysine; alternate modification. The NAD(+) site is built by Leu-603, Asp-604, and Pro-605. Asp-604 is an L-saccharopine binding site. Arg-703 serves as a coordination point for L-saccharopine. Lys-707 carries the N6-acetyllysine modification. An L-saccharopine-binding site is contributed by 724-726 (TLR). Lys-732 is modified (N6-succinyllysine). At Lys-739 the chain carries N6-acetyllysine. Lys-761 carries the post-translational modification N6-acetyllysine; alternate. The residue at position 761 (Lys-761) is an N6-succinyllysine; alternate. Lys-778 and Lys-780 each carry N6-acetyllysine.

It in the N-terminal section; belongs to the AlaDH/PNT family. The protein in the C-terminal section; belongs to the saccharopine dehydrogenase family. Homotetramer. As to expression, highly expressed in kidney and liver, very low expression is seen in heart, brain, spleen, lung, skeletal muscle and testis.

It is found in the mitochondrion. It catalyses the reaction L-saccharopine + NADP(+) + H2O = L-lysine + 2-oxoglutarate + NADPH + H(+). The enzyme catalyses L-saccharopine + NAD(+) + H2O = (S)-2-amino-6-oxohexanoate + L-glutamate + NADH + H(+). It participates in amino-acid degradation; L-lysine degradation via saccharopine pathway; glutaryl-CoA from L-lysine: step 1/6. It functions in the pathway amino-acid degradation; L-lysine degradation via saccharopine pathway; glutaryl-CoA from L-lysine: step 2/6. Functionally, bifunctional enzyme that catalyzes the first two steps in lysine degradation. This is Alpha-aminoadipic semialdehyde synthase, mitochondrial from Mus musculus (Mouse).